We begin with the raw amino-acid sequence, 425 residues long: MNIISVGVNHKTAPIEIRERISLSEVQNKEFITGLISGGLAHEAMVLSTCNRTELYVVPAMHEVTGEYLKDYIISFRDARKDVRPEHFFSRFYCGTARHLFEVSSAIDSLILGEGQILGQVKEAYRIAAEVQAAGILITRLCHTAFSVAKKVKTKTKIMEGAVSVSYAAVELAQKIFSNLSMKKILLVGAGETGELAAKHMFAKNARNIVITNRTQSKAEALAEELGTNRVLPFESYKEHLHEFDIIITAVSTKDYIITEADMHGAMQKRRLKPVIILDLGLPRNADPEIGKLQNMFLKDIDALKHIIDKNLERRSLELPKVHSIIDEELVAFGQWINTLKVRPTIVDLQSKFIEIKEKELERYRYKVSEEELRRMEHLTDRIMKKILHHPIKMLKAPISTSDNMPSRVDLVRNVFDLEEPNQSH.

Residues 49-52 (TCNR), Ser-109, 114-116 (EGQ), and Gln-120 each bind substrate. The active-site Nucleophile is the Cys-50. 189-194 (GAGETG) provides a ligand contact to NADP(+).

Belongs to the glutamyl-tRNA reductase family. In terms of assembly, homodimer.

The enzyme catalyses (S)-4-amino-5-oxopentanoate + tRNA(Glu) + NADP(+) = L-glutamyl-tRNA(Glu) + NADPH + H(+). It participates in porphyrin-containing compound metabolism; protoporphyrin-IX biosynthesis; 5-aminolevulinate from L-glutamyl-tRNA(Glu): step 1/2. The protein operates within porphyrin-containing compound metabolism; chlorophyll biosynthesis. Its function is as follows. Catalyzes the NADPH-dependent reduction of glutamyl-tRNA(Glu) to glutamate 1-semialdehyde (GSA). The sequence is that of Glutamyl-tRNA reductase from Chlorobium luteolum (strain DSM 273 / BCRC 81028 / 2530) (Pelodictyon luteolum).